Here is a 501-residue protein sequence, read N- to C-terminus: MTAAFYDLMDFDEVLEKYDPVMGLEVHVELATETKMFSASSAHFGAAPNSNVDPVSLGLPGALPVVNAKGVEWAIKIGLALNCSIAESSRFARKNYFYPDQPKNYQISQYDEPIAYDGYLDVMLEDGTEWRIEIERAHMEEDTGKLTHLGGTSGRIHGATASLVDCNRAGVPLIEIVTKPIEGAGARAPEIAKAYVSALRDLVKALGVSDGRLDQGSMRVDANLSLRPIGQEEFGTRTETKNINSLKSVEQAITFEMQRQAHVLDNGGTIDQETRHYQETDGTTSKGRPKETAEDYRYFNDPDLPPVIAPAEWVEEIRATLPELPWVRRARIQEEWKLSDAEMRDLVNANALDLIIETVEAGTTPDEARAWWVSYLSQKANETGVELEALPVTPAHVARVVALIKEGKLTNKLGRQAIDGVLAGEGDVDAVVASRGLEVVRDDGAIEAAVDEALAANPDIVEKYRAGNTKVTGAIVGAVMKATRGKADPAQVNKLIAEKLA.

Residues 272 to 291 (QETRHYQETDGTTSKGRPKE) are disordered.

This sequence belongs to the GatB/GatE family. GatB subfamily. In terms of assembly, heterotrimer of A, B and C subunits.

The catalysed reaction is L-glutamyl-tRNA(Gln) + L-glutamine + ATP + H2O = L-glutaminyl-tRNA(Gln) + L-glutamate + ADP + phosphate + H(+). It carries out the reaction L-aspartyl-tRNA(Asn) + L-glutamine + ATP + H2O = L-asparaginyl-tRNA(Asn) + L-glutamate + ADP + phosphate + 2 H(+). Functionally, allows the formation of correctly charged Asn-tRNA(Asn) or Gln-tRNA(Gln) through the transamidation of misacylated Asp-tRNA(Asn) or Glu-tRNA(Gln) in organisms which lack either or both of asparaginyl-tRNA or glutaminyl-tRNA synthetases. The reaction takes place in the presence of glutamine and ATP through an activated phospho-Asp-tRNA(Asn) or phospho-Glu-tRNA(Gln). This is Aspartyl/glutamyl-tRNA(Asn/Gln) amidotransferase subunit B from Corynebacterium efficiens (strain DSM 44549 / YS-314 / AJ 12310 / JCM 11189 / NBRC 100395).